Consider the following 839-residue polypeptide: MTTTTNIINNGVSSFSLNNNSNIPTIHSPSNPIVDCIRDGTMAYIYLVDESYIQQQHQPNPKFPSLIPLPKKLYSTTPNKTTPYPFQFQQNNENLSIVKEIYNYINCFEIKDCRDFHCVDSIKRYARFHLNLTLKFMGCKSIHARQISNTVFEQLEKCRIEQNKQLTATNNNAIVTTDSITKTEQSTTTTTTTTTTTTTTTATTTTQPPIYCVSIQRNIFYYIIGHILSCYQYSKPQYIIDFPVSCEVQDKKHSFTILLGGTSGCGKSTLTALLASRIGFTAVISTDNIRQLLRKFISRQESPILWASTYHAGEIISNPSLSHKEKILQGYEAQNEMIFNKLDILIGHYEKRKESLIVEGVHLDTKLILRLVKKHPSCIPFLMYISNEAKHKERFAIRSKYMTLDPHQNKYTKYFKNIRIINDHLCHGADEHMIPQIDNTSIDRSLATIHGTIFACLKRKVQCGESYYNHETDKMNMLYNQYEQIQHQFWSSKGMLRLIQKKKTVSPHGNNNVTGDVDNNNSNSNNNNVNNNNGDNNGDSNVDNNSNDNDNNNNNSNNISNINNDNDNNNNDNDNSNVDNNNDNSDNSVNSNNSINSNNGNEGSNNCNVVNGNNSNSDILIKVEYNKNNNSSSNDNEYKNSNDNHCNIKNETENSDINGCINNNIISYNNNIKNNTDNTTGNHNYTTMNGNNENDCKNNNNNNNIKTIPNEGQQQPQQQPQQQPPQQSQQQPQLQQKKQQIQEEQQNLNNNNKSIEDDEEAFNSDDEHDHEDDSIRGNESGSVGDHGNSVKKSSLNDKNHNNGNNQSNEDNDDDSDISDSDSDGGERIDYYLDCGSLGS.

Disordered regions lie at residues 504–611, 627–646, and 682–839; these read TVSP…NVVN, KNNNSSSNDNEYKNSNDNHC, and NHNY…SLGS. A compositionally biased stretch (low complexity) spans 509–611; that stretch reads GNNNVTGDVD…EGSNNCNVVN (103 aa). Over residues 636–646 the composition is skewed to basic and acidic residues; the sequence is NEYKNSNDNHC. Low complexity-rich tracts occupy residues 689-704 and 713-753; these read NGNNENDCKNNNNNNN and QQQP…NNNK. Residues 726 to 764 are a coiled coil; sequence QQSQQQPQLQQKKQQIQEEQQNLNNNNKSIEDDEEAFNS. The segment covering 765–776 has biased composition (basic and acidic residues); the sequence is DDEHDHEDDSIR. A compositionally biased stretch (acidic residues) spans 809–823; the sequence is EDNDDDSDISDSDSD.

This is an uncharacterized protein from Dictyostelium discoideum (Social amoeba).